The sequence spans 509 residues: DAP3-binding cell death enhancer 1 (509 aa).

The N-terminal 23 residues, 1-23, are a transit peptide targeting the mitochondrion; it reads MWRLTGILGRALPRLLGPGFRGI. Disordered stretches follow at residues 19-60 and 143-185; these read GFRG…RNRD and VLPS…PGLL. The propeptide at 24-101 is extended MTS; that stretch reads TPKPTSSDGP…AVLALHLARQ (78 aa). Residues 26–40 show a composition bias toward polar residues; it reads KPTSSDGPQTTSTTL. 2 stretches are compositionally biased toward basic and acidic residues: residues 46–60 and 156–168; these read NFDRSGSHGSKRNRD and GLREPRLGQEEPA. TPR repeat units lie at residues 213-245, 246-278, 279-313, 314-351, 352-385, 386-423, and 470-498; these read AGPPGGKNEQDKPKALPLEEAVTSIQQLFQLSV, AIAFNFLGTENIKTGDYTAAFSYFQKAADRGYS, KAQYNVGLCLEHGRGTPRDLSKAVLFYHLAAVQGH, SLAQYRYARCLLQSPGSMSDPERQRAVSLLKQAADSGL, TEAQAFLGVLFTKEPHLDEQKAVKYFWLAASNGD, SQSRFHLGICYEKGLGVQRNLGEAVKCYQKSAAMGNEP, and ASSTGNLGLLCRSGHLGTSHGAPSRAMPS. The SIFI-degron signature appears at 307 to 326; it reads LAAVQGHSLAQYRYARCLLQ.

It belongs to the DELE1 family. Interacts with DAP3. As to quaternary structure, interacts (via TPR repeats) with EIF2AK1/HRI; activating the protein kinase activity of EIF2AK1/HRI, thereby promoting the integrated stress response (ISR). In terms of assembly, homooctamer; oligomerization is required to activate EIF2AK1/HRI. Interacts (via TPR repeats) with EIF2AK1/HRI; activating the protein kinase activity of EIF2AK1/HRI, thereby promoting the integrated stress response (ISR). Post-translationally, unstable protein in absence of stress: imported in the mitochondrial matrix following processing by the mitochondrial-processing peptidase (MPP), where it is degraded by LONP1. Stabilized in response to iron deficiency: iron deficiency impairs mitochondrial import, promoting localization at the mitochondrial surface and stabilization. Cleaved by OMA1 in response to mitochondrial stress, generating the DAP3-binding cell death enhancer 1 short form (DELE1(S) or S-DELE1) that accumulates in the cytosol and activates the protein kinase activity of EIF2AK1/HRI. Protein cleavage by OMA1 can take place at different positions, and apparently does not require a specific sequence motif. In terms of processing, ubiquitinated and degraded by the SIFI complex once the mitochondrial stress has been resolved, thereby providing stress response silencing. Within the SIFI complex, UBR4 initiates ubiquitin chain that are further elongated or branched by KCMF1.

Its subcellular location is the mitochondrion. It localises to the mitochondrion outer membrane. The protein resides in the mitochondrion inner membrane. It is found in the cytoplasm. The protein localises to the cytosol. In terms of biological role, protein kinase activator that acts as a key activator of the integrated stress response (ISR) following various stresses, such as iron deficiency, mitochondrial stress or mitochondrial DNA breaks. Detects impaired protein import and processing in mitochondria, activating the ISR. May also required for the induction of death receptor-mediated apoptosis through the regulation of caspase activation. Protein kinase activator that activates the ISR in response to iron deficiency: iron deficiency impairs mitochondrial import, promoting DELE1 localization at the mitochondrial surface, where it binds and activates EIF2AK1/HRI to trigger the ISR. Its function is as follows. Protein kinase activator generated by protein cleavage in response to mitochondrial stress, which accumulates in the cytosol and specifically binds to and activates the protein kinase activity of EIF2AK1/HRI. It thereby activates the integrated stress response (ISR): EIF2AK1/HRI activation promotes eIF-2-alpha (EIF2S1) phosphorylation, leading to a decrease in global protein synthesis and the induction of selected genes, including the transcription factor ATF4, the master transcriptional regulator of the ISR. Also acts as an activator of PRKN-independent mitophagy: activates the protein kinase activity of EIF2AK1/HRI in response to mitochondrial damage, promoting eIF-2-alpha (EIF2S1) phosphorylation, leading to mitochondrial localization of EIF2S1 followed by induction of mitophagy. This Rattus norvegicus (Rat) protein is DAP3-binding cell death enhancer 1.